The chain runs to 395 residues: Phosphoglycerate kinase (395 aa).

Residues 20–22 (DLN), R35, 58–61 (HFGR), R117, and R150 contribute to the substrate site. ATP-binding positions include K200, E322, and 352 to 355 (GGDT).

It belongs to the phosphoglycerate kinase family. In terms of assembly, monomer.

It localises to the cytoplasm. It catalyses the reaction (2R)-3-phosphoglycerate + ATP = (2R)-3-phospho-glyceroyl phosphate + ADP. The protein operates within carbohydrate degradation; glycolysis; pyruvate from D-glyceraldehyde 3-phosphate: step 2/5. This is Phosphoglycerate kinase from Brucella suis biovar 1 (strain 1330).